The following is a 525-amino-acid chain: Squalene epoxidase 3 (525 aa).

The chain crosses the membrane as a helical span at residues 9–29 (HCILTTTFVASLFAFLLLYVL). Residues 64–65 (VA), 84–85 (ER), Arg-92, Arg-163, Val-179, Asp-341, and Met-354 contribute to the FAD site. A run of 2 helical transmembrane segments spans residues 452-472 (LVLH…VPLP) and 477-497 (LWLG…IIKA).

Belongs to the squalene monooxygenase family. Requires FAD as cofactor. In terms of tissue distribution, expressed in seedlings, leaves, stems, inflorescences and siliques.

The protein localises to the membrane. The catalysed reaction is squalene + reduced [NADPH--hemoprotein reductase] + O2 = (S)-2,3-epoxysqualene + oxidized [NADPH--hemoprotein reductase] + H2O + H(+). It functions in the pathway terpene metabolism; lanosterol biosynthesis; lanosterol from farnesyl diphosphate: step 2/3. Functionally, catalyzes the stereospecific oxidation of squalene to (S)-2,3-epoxysqualene, and is considered to be a rate-limiting enzyme in steroid biosynthesis. Can produce not only oxidosqualene, but also 2,3:22,23-dioxidosqualene. The polypeptide is Squalene epoxidase 3 (SQE3) (Arabidopsis thaliana (Mouse-ear cress)).